The chain runs to 862 residues: ATP-dependent helicase Lhr-Core (862 aa).

Residues glutamine 37, lysine 60, threonine 61, aspartate 178, glutamate 179, valine 360, arginine 377, and histidine 380 each coordinate ATP. The region spanning 41–233 (IMDIHRGRNV…FLVGYSYGSE (193 aa)) is the Helicase ATP-binding domain. Positions 178 to 181 (DEIH) match the DEAH box motif. Residues 269–424 (ALYDILHDLI…SIKVPENCLD (156 aa)) enclose the Helicase C-terminal domain. A WH domain region spans residues 425-513 (VLAQHIYGMA…LYSTNIGTIP (89 aa)). Residues 514-862 (DRSAAVVKCG…HQAIIDEIKR (349 aa)) are domain 4.

The protein belongs to the Lhr helicase family. Lhr-Core subfamily. Monomer.

It catalyses the reaction Couples ATP hydrolysis with the unwinding of duplex DNA by translocating in the 3'-5' direction.. The catalysed reaction is ATP + H2O = ADP + phosphate + H(+). Functionally, DNA helicase that translocates in a 3'-5' direction on single-stranded (ss)DNA, probably involved in DNA repair. Most active on three- or four-stranded forked DNA; flayed structures and Holliday junction (HJ) substrates are unwound slightly less well. Also unwinds 3'-tailed duplexes; both RNA:DNA hybrids and double-stranded (ds)DNA with a 3'-single strand (ss)DNA loading strand are unwound. Substrates where the helicase loads on a 3'-ssRNA tail (DNA:RNA and RNA:RNA) were not tested. Blunt-ended dsDNA is not a substrate. Probably involved in replication-coupled DNA repair; remodeling of fork DNA after binding by Lhr generates ssDNA for ATP-dependent DNA translocation. This is ATP-dependent helicase Lhr-Core from Methanothermobacter thermautotrophicus (strain ATCC 29096 / DSM 1053 / JCM 10044 / NBRC 100330 / Delta H) (Methanobacterium thermoautotrophicum).